Consider the following 39-residue polypeptide: LIM/homeobox protein xLIM-2B (39 aa).

The segment at residues 1 to 39 (KAKQLETLKAAFAATPKPTRHIREQLAQETGLNMRVIQV) is a DNA-binding region (homeobox).

It localises to the nucleus. The polypeptide is LIM/homeobox protein xLIM-2B (lim2b) (Xenopus laevis (African clawed frog)).